Here is a 233-residue protein sequence, read N- to C-terminus: Ribosome maturation factor RimP (233 aa).

The segment covering 167-179 has biased composition (basic and acidic residues); sequence RGKAAEREKKRDL. Residues 167–233 form a disordered region; that stretch reads RGKAAEREKK…RARRGEIDPD (67 aa). Low complexity predominate over residues 187–196; it reads PHAKPAAQAK. Residues 220-233 are compositionally biased toward basic and acidic residues; sequence LAADRARRGEIDPD.

It belongs to the RimP family.

The protein resides in the cytoplasm. Its function is as follows. Required for maturation of 30S ribosomal subunits. In Bradyrhizobium sp. (strain ORS 278), this protein is Ribosome maturation factor RimP.